The primary structure comprises 342 residues: uncharacterized protein (342 aa).

Residues 155-309 enclose the Nudix hydrolase domain; it reads TYGIHINGYV…KPNCALVMVD (155 aa).

This is an uncharacterized protein from Saccharomyces cerevisiae (strain ATCC 204508 / S288c) (Baker's yeast).